A 72-amino-acid chain; its full sequence is Translation initiation factor IF-1 (72 aa).

The region spanning 1–72 (MAKDDVIEID…DKGRITFRYK (72 aa)) is the S1-like domain.

This sequence belongs to the IF-1 family. In terms of assembly, component of the 30S ribosomal translation pre-initiation complex which assembles on the 30S ribosome in the order IF-2 and IF-3, IF-1 and N-formylmethionyl-tRNA(fMet); mRNA recruitment can occur at any time during PIC assembly.

The protein localises to the cytoplasm. In terms of biological role, one of the essential components for the initiation of protein synthesis. Stabilizes the binding of IF-2 and IF-3 on the 30S subunit to which N-formylmethionyl-tRNA(fMet) subsequently binds. Helps modulate mRNA selection, yielding the 30S pre-initiation complex (PIC). Upon addition of the 50S ribosomal subunit IF-1, IF-2 and IF-3 are released leaving the mature 70S translation initiation complex. This is Translation initiation factor IF-1 from Campylobacter jejuni subsp. doylei (strain ATCC BAA-1458 / RM4099 / 269.97).